Here is a 672-residue protein sequence, read N- to C-terminus: MSDPEGETLRSTFPSYMAEGERLYLCGEFSKAAQSFSNALYLQDGDKNCLVARSKCFLKMGDLERSLKDAEASLQSDPAFCKGILQKAETLYTMGDFEFALVFYHRGYKLRPDREFRVGIQKAQEAINNSVGSPSSIKLENKGDLSFLSKQAENIKAQQKPQPMKHLLHPTKGEPKWKASLKSEKTVRQLLGELYVDKEYLEKLLLDEDLIKGTMKGGLTVEDLIMTGINYLDTHSNFWRQQKPIYARERDRKLMQEKWLRDHKRRPSQTAHYILKSLEDIDMLLTSGSAEGSLQKAEKVLKKVLEWNKEEVPNKDELVGNLYSCIGNAQIELGQMEAALQSHRKDLEIAKEYDLPDAKSRALDNIGRVFARVGKFQQAIDTWEEKIPLAKTTLEKTWLFHEIGRCYLELDQAWQAQNYGEKSQQCAEEEGDIEWQLNASVLVAQAQVKLRDFESAVNNFEKALERAKLVHNNEAQQAIISALDDANKGIIRELRKTNYVENLKEKSEGEASLYEDRIITREKDMRRVRDEPEKVVKQWDHSEDEKETDEDDEAFGEALQSPASGKQSVEAGKARSDLGAVAKGLSGELGTRSGETGRKLLEAGRRESREIYRRPSGELEQRLSGEFSRQEPEELKKLSEVGRREPEELGKTQFGEIGETKKTGNEMEKEYE.

TPR repeat units follow at residues 13–46 (FPSYMAEGERLYLCGEFSKAAQSFSNALYLQDGD), 48–80 (NCLVARSKCFLKMGDLERSLKDAEASLQSDPAF), 81–114 (CKGILQKAETLYTMGDFEFALVFYHRGYKLRPDR), 275–311 (LKSLEDIDMLLTSGSAEGSLQKAEKVLKKVLEWNKEE), 320–353 (GNLYSCIGNAQIELGQMEAALQSHRKDLEIAKEY), 360–393 (SRALDNIGRVFARVGKFQQAIDTWEEKIPLAKTT), 397–430 (TWLFHEIGRCYLELDQAWQAQNYGEKSQQCAEEE), and 437–470 (LNASVLVAQAQVKLRDFESAVNNFEKALERAKLV). The span at 527–544 (RVRDEPEKVVKQWDHSED) shows a compositional bias: basic and acidic residues. The tract at residues 527 to 672 (RVRDEPEKVV…TGNEMEKEYE (146 aa)) is disordered. Residues 545-555 (EKETDEDDEAF) show a composition bias toward acidic residues. Composition is skewed to basic and acidic residues over residues 595-650 (ETGR…EELG) and 658-672 (GETKKTGNEMEKEYE).

In terms of assembly, component of the outer dynein arm-docking complex along with ODAD1, ODAD2 and ODAD3. Interacts with ODAD1; this interaction may facilitate the recruitment and/or attachment of outer dynein arm docking complex proteins, including ODAD1, ODAD3 and ODAD2, to ciliary axonemes. Interacts with components of the IFT complex A, including IFT140, TTC21B/IFT139 and WDR19/IFT144, and the IFT complex B, including IFT46, IFT52 and IFT57. Interacts with CFAP53. Expressed in the nasal mucosa (at protein level).

The protein resides in the cytoplasm. Its subcellular location is the cytoskeleton. The protein localises to the cilium axoneme. Functionally, component of the outer dynein arm-docking complex (ODA-DC) that mediates outer dynein arms (ODA) binding onto the doublet microtubule. Plays an essential role for the assembly of ODA-DC and for the docking of ODA in ciliary axoneme. In Homo sapiens (Human), this protein is Outer dynein arm-docking complex subunit 4.